The following is a 339-amino-acid chain: Phenylalanine--tRNA ligase alpha subunit (339 aa).

Residue Glu253 participates in Mg(2+) binding.

It belongs to the class-II aminoacyl-tRNA synthetase family. Phe-tRNA synthetase alpha subunit type 1 subfamily. As to quaternary structure, tetramer of two alpha and two beta subunits. The cofactor is Mg(2+).

The protein localises to the cytoplasm. The catalysed reaction is tRNA(Phe) + L-phenylalanine + ATP = L-phenylalanyl-tRNA(Phe) + AMP + diphosphate + H(+). The polypeptide is Phenylalanine--tRNA ligase alpha subunit (Thioalkalivibrio sulfidiphilus (strain HL-EbGR7)).